The sequence spans 684 residues: Methionine--tRNA ligase (684 aa).

The 'HIGH' region motif lies at 15-25 (PYANGAIHLGH). 4 residues coordinate Zn(2+): cysteine 146, cysteine 149, cysteine 159, and cysteine 162. Positions 331 to 335 (KMSKS) match the 'KMSKS' region motif. Lysine 334 lines the ATP pocket. Residues 582-684 (DFAKLDLRVA…SGVTAGMQVR (103 aa)) form the tRNA-binding domain.

The protein belongs to the class-I aminoacyl-tRNA synthetase family. MetG type 1 subfamily. As to quaternary structure, homodimer. Zn(2+) serves as cofactor.

It localises to the cytoplasm. The catalysed reaction is tRNA(Met) + L-methionine + ATP = L-methionyl-tRNA(Met) + AMP + diphosphate. In terms of biological role, is required not only for elongation of protein synthesis but also for the initiation of all mRNA translation through initiator tRNA(fMet) aminoacylation. In Glaesserella parasuis serovar 5 (strain SH0165) (Haemophilus parasuis), this protein is Methionine--tRNA ligase.